The chain runs to 279 residues: MSHYGRIKLLLEQHGLSPNKRFGQNFLVDPSVAPRIVALAGIKAGDRVLEIGPGVGSLTIPLLQKAGAVTAVEKDRKLLPLLRVEAAGVGALTLVEEDALLVDYTALAQQLGGPLKLAANLPYNISTPLMVHLLDHHAAFECMALMFQKEVAQRLAAEPGSKAYGALTVQCALWAEIRHGFDVPPAAFLPAPKVTSAVVHVQMMRQPRVAVEDERHFVRVVKAAFAQRRKTLRNTLKTICPDPNRWLEQAGIDGALRAEVLTLAQFAQLANTPMPTSAP.

Positions 25, 27, 52, 73, 98, and 120 each coordinate S-adenosyl-L-methionine.

It belongs to the class I-like SAM-binding methyltransferase superfamily. rRNA adenine N(6)-methyltransferase family. RsmA subfamily.

It localises to the cytoplasm. The enzyme catalyses adenosine(1518)/adenosine(1519) in 16S rRNA + 4 S-adenosyl-L-methionine = N(6)-dimethyladenosine(1518)/N(6)-dimethyladenosine(1519) in 16S rRNA + 4 S-adenosyl-L-homocysteine + 4 H(+). Functionally, specifically dimethylates two adjacent adenosines (A1518 and A1519) in the loop of a conserved hairpin near the 3'-end of 16S rRNA in the 30S particle. May play a critical role in biogenesis of 30S subunits. The chain is Ribosomal RNA small subunit methyltransferase A from Magnetococcus marinus (strain ATCC BAA-1437 / JCM 17883 / MC-1).